A 1142-amino-acid chain; its full sequence is Melanoma-associated antigen C1 (1142 aa).

Positions 1–132 (MGDKDMPTAG…DVQSPLQNPA (132 aa)) are disordered. Over residues 13 to 42 (SLLQSSSESPQSCPEGEDSQSPLQIPQSSP) the composition is skewed to low complexity. Phosphoserine is present on serine 63. Over residues 76-87 (SQSPLQIPQSSP) the composition is skewed to low complexity. Over residues 92–103 (TQSPLQNSQSSP) the composition is skewed to polar residues. Phosphoserine is present on residues serine 207 and serine 382. Disordered regions lie at residues 502–778 (TQST…LQRP) and 791–893 (LQSS…SLTD). The span at 614 to 626 (SPLQGEEFQSSLQ) shows a compositional bias: polar residues. Over residues 627–659 (SPVSICSSSTPSSLPQSFPESSQSPPEGPVQSP) the composition is skewed to low complexity. Residues 671–680 (HSQSPLQSPE) show a composition bias toward polar residues. Low complexity-rich tracts occupy residues 741–762 (QSPV…FPES) and 807–889 (QSPL…LESD). One can recognise an MAGE domain in the interval 908–1106 (LDEKVDELAR…ITFPSSYKDA (199 aa)). Serine 1063 bears the Phosphoserine mark. The tract at residues 1118-1142 (IDTTDDSTATESASSSVMSPSFSSE) is disordered. The segment covering 1123–1142 (DSTATESASSSVMSPSFSSE) has biased composition (low complexity).

Expressed in testis and in tumors of a wide variety of histologic types.

Its subcellular location is the cytoplasm. This chain is Melanoma-associated antigen C1 (MAGEC1), found in Homo sapiens (Human).